Here is a 129-residue protein sequence, read N- to C-terminus: Glycine cleavage system H protein (129 aa).

Residues 24 to 106 (TFTVGISEHA…YGDGWLFRIK (83 aa)) enclose the Lipoyl-binding domain. Lysine 65 carries the N6-lipoyllysine modification.

This sequence belongs to the GcvH family. In terms of assembly, the glycine cleavage system is composed of four proteins: P, T, L and H. The cofactor is (R)-lipoate.

Functionally, the glycine cleavage system catalyzes the degradation of glycine. The H protein shuttles the methylamine group of glycine from the P protein to the T protein. This is Glycine cleavage system H protein from Idiomarina loihiensis (strain ATCC BAA-735 / DSM 15497 / L2-TR).